A 350-amino-acid polypeptide reads, in one-letter code: Trans-enoyl reductase iliB (350 aa).

50 to 53 (VDGK) lines the NADP(+) pocket. Residue 145 to 152 (AAIATVGL) participates in substrate binding. Residues 177–180 (SAAS), Tyr-195, and 242–243 (LD) each bind NADP(+). Residue 262-266 (TPTQF) coordinates substrate. 331 to 332 (IK) contacts NADP(+).

Belongs to the zinc-containing alcohol dehydrogenase family. As to quaternary structure, monomer.

It catalyses the reaction N-[(4E,6E,10S,12Z,14E)-6,10-dimethyl-3-oxohexadeca-4,6,12,14-tetraenoyl]-L-tyrosyl-[ACP] = (3E,5S)-3-[(2E,4E,8S,10E,12Z)-1-hydroxy-4,8-dimethyltetradeca-2,4,10,12-tetraen-1-ylidene]-5-[(4-hydroxyphenyl)methyl]pyrrolidine-2,4-dione + holo-[ACP] + H(+). Its pathway is mycotoxin biosynthesis. Its function is as follows. Trans-enoyl reductase; part of the gene cluster that mediates the biosynthesis of ilicicolin H, a 4-hydroxy-2-pyridonealkaloid that has potent and broad antifungal activities by inhibiting the mitochondrial respiration chain. IliB collaborates with the hybrid PKS-NRPS synthetase iliA to assemble the backbone of ilicicolin H. The PKS portion of iliA and trans-acting enoyl reductase iliB work together to construct an octaketide, and two methyl groups are introduced by the MT domain of iliA during the chain assembly. The nascent chain is then condensed with tyrosine, catalyzed by the iliA C domain, and the resulting PKS-NRPS hybrid is offloaded by the iliA RED domain to form an advanced tetramic acid intermediate. The biosynthesis of ilicicolin H starts with formation of the tetramic acid by the hybrid PKS-NRPS synthetase iliA with the partnering trans-enoyl reductase iliB since iliA lacks a designated enoylreductase (ER) domain. The cytochrome P450 monooxygenase iliC then catalyzes the ring expansion of the tetramate to the acyclic 2-pyridone. The pericyclase iliD further converts the acyclic 2-pyridone into 8-epi-ilicicolin H. 8-epi-ilicicolin H might then spontaneously convert to ilicicolin H since ilicicolin H is produced in the absence of the epimerase iliE, in contrast to what was observed for the Talaromyces variabilis ilicolin H biosynthetic pathway. This Hypocrea jecorina (strain QM6a) (Trichoderma reesei) protein is Trans-enoyl reductase iliB.